A 325-amino-acid polypeptide reads, in one-letter code: MTLLFDGDRRIKSPALAPAGGDRRARDPIELTIGLVNNMPDSALKATDVQIARLLQQAAPWHVRIRLHCFSLPSIARSPMASSHVAQTYTDIDRLDGLDIDGLIVTGAEPVAARLRDESYWPDLAAIVDWARTNTKTTIWSCLAAHAAVLHLDDIERQRLASKCSGVFDCVKVRDDWLTHGIDAPLQVPHSRLNAVNEPLLAERGYDILTRSAEVGVDIFARTMPSRFVFFQGHPEYDALSLQREYMRDIARYLAGQREDYPRPPRSYFSAESEAVLNTFEIRARARRDPTLAAELPGLTLRPDLAAGHAAKLLFRNWIGYLADG.

The active-site Acyl-thioester intermediate is the Cys142. The substrate site is built by Lys163 and Ser191. The active-site Proton acceptor is the His234. Glu236 is an active-site residue. Arg248 serves as a coordination point for substrate.

This sequence belongs to the MetA family.

It localises to the cytoplasm. It carries out the reaction L-homoserine + succinyl-CoA = O-succinyl-L-homoserine + CoA. Its pathway is amino-acid biosynthesis; L-methionine biosynthesis via de novo pathway; O-succinyl-L-homoserine from L-homoserine: step 1/1. Functionally, transfers a succinyl group from succinyl-CoA to L-homoserine, forming succinyl-L-homoserine. This Bradyrhizobium japonicum protein is Homoserine O-succinyltransferase.